A 177-amino-acid polypeptide reads, in one-letter code: Voltage-dependent L-type calcium channel subunit alpha-1C (177 aa).

The chain crosses the membrane as a helical span at residues 27–45 (ITFFRLFRVMRLVKLLSRG). A helical membrane pass occupies residues 64 to 84 (YVALLIVMLFFIYAVIGMQVF). Residue N90 is glycosylated (N-linked (GlcNAc...) asparagine). Residues 107–125 (AVLLLFRCATGEAWQEIML) constitute an intramembrane region (pore-forming). A Selectivity filter of repeat IV motif is present at residues 116 to 119 (TGEA). A disulfide bond links C133 and C149. N141 is a glycosylation site (N-linked (GlcNAc...) asparagine). Residues 154–177 (AVFYFISFYMLCAFLIIDLFVAVI) form a helical membrane-spanning segment.

Belongs to the calcium channel alpha-1 subunit (TC 1.A.1.11) family. CACNA1C subfamily. Component of a calcium channel complex consisting of a pore-forming alpha subunit (CACNA1C) and ancillary beta, gamma and delta subunits. The channel complex contains alpha, beta, gamma and delta subunits in a 1:1:1:1 ratio, i.e. it contains only one of each type of subunit. CACNA1C channel activity is modulated by ancillary subunits, such as CACNB2, CACNB3, CACNA2D1 and CACNA2D4. Phosphorylation by PKA activates the channel.

Its subcellular location is the cell membrane. It localises to the perikaryon. It is found in the postsynaptic density membrane. The protein resides in the cell projection. The protein localises to the dendrite. Its subcellular location is the sarcolemma. It localises to the T-tubule. The catalysed reaction is Ca(2+)(in) = Ca(2+)(out). With respect to regulation, inhibited by dihydropyridines (DHP), such as isradipine. Channel activity is regulated by Ca(2+) and calmodulin. Pore-forming, alpha-1C subunit of the voltage-gated calcium channel that gives rise to L-type calcium currents. Mediates influx of calcium ions into the cytoplasm, and thereby triggers calcium release from the sarcoplasm. Plays an important role in excitation-contraction coupling in the heart. Required for normal heart development and normal regulation of heart rhythm. Required for normal contraction of smooth muscle cells in blood vessels and in the intestine. Essential for normal blood pressure regulation via its role in the contraction of arterial smooth muscle cells. Long-lasting (L-type) calcium channels belong to the 'high-voltage activated' (HVA) group. The protein is Voltage-dependent L-type calcium channel subunit alpha-1C (CACNA1C) of Gallus gallus (Chicken).